The following is a 174-amino-acid chain: Translationally-controlled tumor protein homolog 1 (174 aa).

In terms of domain architecture, TCTP spans 1-174 (MRVFKDIVGY…FKDGLESVKY (174 aa)).

The protein belongs to the TCTP family.

Its subcellular location is the cytoplasm. Functionally, involved in calcium binding and microtubule stabilization. The chain is Translationally-controlled tumor protein homolog 1 from Dictyostelium discoideum (Social amoeba).